We begin with the raw amino-acid sequence, 387 residues long: 3-ketoacyl-CoA thiolase (387 aa).

Cys91 acts as the Acyl-thioester intermediate in catalysis. Catalysis depends on proton acceptor residues His343 and Cys373.

This sequence belongs to the thiolase-like superfamily. Thiolase family. As to quaternary structure, heterotetramer of two alpha chains (FadB) and two beta chains (FadA).

It localises to the cytoplasm. The catalysed reaction is an acyl-CoA + acetyl-CoA = a 3-oxoacyl-CoA + CoA. The protein operates within lipid metabolism; fatty acid beta-oxidation. Catalyzes the final step of fatty acid oxidation in which acetyl-CoA is released and the CoA ester of a fatty acid two carbons shorter is formed. The protein is 3-ketoacyl-CoA thiolase of Shewanella loihica (strain ATCC BAA-1088 / PV-4).